The chain runs to 254 residues: Pyrroloquinoline-quinone synthase (254 aa).

Belongs to the PqqC family.

It carries out the reaction 6-(2-amino-2-carboxyethyl)-7,8-dioxo-1,2,3,4,7,8-hexahydroquinoline-2,4-dicarboxylate + 3 O2 = pyrroloquinoline quinone + 2 H2O2 + 2 H2O + H(+). It participates in cofactor biosynthesis; pyrroloquinoline quinone biosynthesis. In terms of biological role, ring cyclization and eight-electron oxidation of 3a-(2-amino-2-carboxyethyl)-4,5-dioxo-4,5,6,7,8,9-hexahydroquinoline-7,9-dicarboxylic-acid to PQQ. This Rhodopseudomonas palustris (strain ATCC BAA-98 / CGA009) protein is Pyrroloquinoline-quinone synthase.